Reading from the N-terminus, the 353-residue chain is Rhodopsin (353 aa).

Topologically, residues 1–36 (MNGTEGPYFYIPMVNTTGIVRSPYEYPQYYLVNPAA) are extracellular. N-linked (GlcNAc...) asparagine glycosylation is found at Asn-2 and Asn-15. A helical membrane pass occupies residues 37-61 (YAALGAYMFLLILVGFPINFLTLYV). At 62–73 (TIEHKKLRTPLN) the chain is on the cytoplasmic side. A helical transmembrane segment spans residues 74–96 (YILLNLAVANLFMVFGGFTTTMY). Residues 97–110 (TSMHGYFVLGRLGC) lie on the Extracellular side of the membrane. Cys-110 and Cys-187 are disulfide-bonded. The chain crosses the membrane as a helical span at residues 111 to 133 (NLEGFFATLGGEIALWSLVVLAI). Residues 134-136 (ERW) carry the 'Ionic lock' involved in activated form stabilization motif. The Cytoplasmic portion of the chain corresponds to 134–152 (ERWMVVCKPISNFRFGEDH). The helical transmembrane segment at 153-173 (AIMGLAFTWVMAAACAVPPLV) threads the bilayer. At 174–202 (GWSRYIPEGMQCSCGIDYYTRAEGFNNES) the chain is on the extracellular side. A glycan (N-linked (GlcNAc...) asparagine) is linked at Asn-200. A helical membrane pass occupies residues 203–224 (FVIYMFVCHFLIPLVVVFFCYG). Residues 225 to 252 (RLLCAVKEAAAAQQESETTQRAEREVSR) are Cytoplasmic-facing. The helical transmembrane segment at 253–274 (MVVIMVVAFLICWCPYAGVAWY) threads the bilayer. Over 275 to 286 (IFTHQGSEFGPL) the chain is Extracellular. The chain crosses the membrane as a helical span at residues 287 to 308 (FMTFPAFFAKSSSIYNPMIYIC). Lys-296 is subject to N6-(retinylidene)lysine. Over 309–353 (MNKQFRHCMITTLCCGKNPFEEEEGASTTSKTEASSVSSSSVSPA) the chain is Cytoplasmic. Residues Cys-322 and Cys-323 are each lipidated (S-palmitoyl cysteine). Positions 330-353 (EEEGASTTSKTEASSVSSSSVSPA) are disordered. A compositionally biased stretch (low complexity) spans 334 to 353 (ASTTSKTEASSVSSSSVSPA).

It belongs to the G-protein coupled receptor 1 family. Opsin subfamily. Post-translationally, phosphorylated on some or all of the serine and threonine residues present in the C-terminal region. Contains one covalently linked retinal chromophore.

The protein resides in the membrane. It is found in the cell projection. It localises to the cilium. The protein localises to the photoreceptor outer segment. Photoreceptor required for image-forming vision at low light intensity. While most salt water fish species use retinal as chromophore, most freshwater fish use 3-dehydroretinal, or a mixture of retinal and 3-dehydroretinal. Light-induced isomerization of 11-cis to all-trans retinal triggers a conformational change that activates signaling via G-proteins. Subsequent receptor phosphorylation mediates displacement of the bound G-protein alpha subunit by arrestin and terminates signaling. The sequence is that of Rhodopsin (rho) from Chelon saliens (Leaping mullet).